We begin with the raw amino-acid sequence, 716 residues long: Beta-1,2-glucosyltransferase (716 aa).

Tyrosine 52, isoleucine 99, alanine 101, glutamate 102, asparagine 175, glutamate 176, glycine 278, tryptophan 279, glutamate 343, and arginine 349 together coordinate sophorose. Glutamate 176 acts as the Proton donor/acceptor in catalysis. Residues glutamate 176, glycine 278, and tryptophan 279 each contribute to the beta-D-glucose site. Residue glutamate 343 is the Nucleophile of the active site. The beta-D-glucose site is built by arginine 349, lysine 358, and glutamate 361. Position 378 (tyrosine 378) interacts with sophorose. 2 residues coordinate beta-D-glucose: serine 708 and tyrosine 709.

The protein belongs to the glycosyl hydrolase 35 family. In terms of assembly, homidimer.

Its subcellular location is the cytoplasm. The catalysed reaction is a D-glucoside + [(1-&gt;2)-beta-D-glucosyl](n) = a beta-D-glucosyl-(1-&gt;2)-D-glucoside + [(1-&gt;2)-beta-D-glucosyl](n-1). Glycosyltransferase acting on beta-1,2-glucooligosaccharides. Catalyzes the transfer of a glucosyl residue from the non-reducing end of a 1,2-beta-D-glucan to a glucose residue of an acceptor molecule, forming a beta-1,2-glucosidic bond. The beta-1,2-linked glucose dimer sophorose is the preferred donor in vitro. Has a very broad specificity for the acceptor and can act on various aryl- and alkyl-glucosides. Does not show any hydrolytic activity. The protein is Beta-1,2-glucosyltransferase of Ignavibacterium album (strain DSM 19864 / JCM 16511 / NBRC 101810 / Mat9-16).